We begin with the raw amino-acid sequence, 584 residues long: Major capsid protein (584 aa).

The protein belongs to the NCLDV major capsid protein family.

It is found in the virion. Its function is as follows. Major protein of the capsid. The polypeptide is Major capsid protein (MCP) (Haptolina ericina (CeV01)).